Consider the following 185-residue polypeptide: Potassium-transporting ATPase KdpC subunit (185 aa).

A helical membrane pass occupies residues 14–34 (ALSLLTGVAYPLALTGIAAVI).

This sequence belongs to the KdpC family. In terms of assembly, the system is composed of three essential subunits: KdpA, KdpB and KdpC.

The protein localises to the cell inner membrane. Its function is as follows. Part of the high-affinity ATP-driven potassium transport (or Kdp) system, which catalyzes the hydrolysis of ATP coupled with the electrogenic transport of potassium into the cytoplasm. This subunit acts as a catalytic chaperone that increases the ATP-binding affinity of the ATP-hydrolyzing subunit KdpB by the formation of a transient KdpB/KdpC/ATP ternary complex. The protein is Potassium-transporting ATPase KdpC subunit of Cereibacter sphaeroides (strain ATCC 17023 / DSM 158 / JCM 6121 / CCUG 31486 / LMG 2827 / NBRC 12203 / NCIMB 8253 / ATH 2.4.1.) (Rhodobacter sphaeroides).